A 137-amino-acid polypeptide reads, in one-letter code: Large ribosomal subunit protein uL16 (137 aa).

The protein belongs to the universal ribosomal protein uL16 family. As to quaternary structure, part of the 50S ribosomal subunit.

In terms of biological role, binds 23S rRNA and is also seen to make contacts with the A and possibly P site tRNAs. The protein is Large ribosomal subunit protein uL16 of Leuconostoc mesenteroides subsp. mesenteroides (strain ATCC 8293 / DSM 20343 / BCRC 11652 / CCM 1803 / JCM 6124 / NCDO 523 / NBRC 100496 / NCIMB 8023 / NCTC 12954 / NRRL B-1118 / 37Y).